Reading from the N-terminus, the 270-residue chain is MSLKPVKLAFEKYSATVAKHPPVLIFHGLLGSKRNWRSLAKKFSCKLDRDIYAIDQRCHGDSPCVAPLSYSAMALDAFQFMKDHKLDKASIIGHSMGAKTAMVTALKWPDKVEKLVVVDNSPWYQDLPRDYGAYFRKMIQIDEANITKYSEADKMMSTVEKDILVRSFLLSNLKKDSNNSNTFKFRVPIELISKSLKTIEGFPASLNDLVYDSPTLVIRALKAPFIPDSALPVFKKFFPKYELVSLDCGHWVHFEKPKEFSESIINFLNN.

The region spanning 21–257 (PPVLIFHGLL…CGHWVHFEKP (237 aa)) is the AB hydrolase-1 domain. Catalysis depends on charge relay system residues serine 95, glutamate 190, and histidine 250.

The protein belongs to the AB hydrolase superfamily.

The protein localises to the mitochondrion. This chain is Abhydrolase domain-containing protein C22H12.03, found in Schizosaccharomyces pombe (strain 972 / ATCC 24843) (Fission yeast).